A 395-amino-acid polypeptide reads, in one-letter code: Pyruvate synthase subunit PorA (395 aa).

Heterotetramer of one alpha, one beta, one delta and one gamma chain.

It carries out the reaction 2 oxidized [2Fe-2S]-[ferredoxin] + pyruvate + CoA = 2 reduced [2Fe-2S]-[ferredoxin] + acetyl-CoA + CO2 + H(+). The polypeptide is Pyruvate synthase subunit PorA (porA) (Pyrococcus horikoshii (strain ATCC 700860 / DSM 12428 / JCM 9974 / NBRC 100139 / OT-3)).